Here is a 219-residue protein sequence, read N- to C-terminus: Tegument protein UL14 (219 aa).

The disordered stretch occupies residues 161–219 (ANGPSRIGSHPTYTPTPTGPPGAPAAPLSRTPPSPAPPTGPATDPASASGFARDYPDGE). Residues 177–200 (PTGPPGAPAAPLSRTPPSPAPPTG) are compositionally biased toward pro residues.

This sequence belongs to the alphaherpesvirinae HHV-1 UL14 protein family. In terms of assembly, interacts with UL51. Post-translationally, phosphorylated.

It localises to the virion tegument. The protein resides in the host cytoplasm. It is found in the host nucleus. Its function is as follows. Contributes to the nuclear transport of the viral transcriptional activator VP16 during the early phase of infection. Therefore, participates indirectly in the regulation of the immediate-early gene expression. Additionally, seems to be important for efficient nuclear targeting of capsids. The UL51-UL14 complex regulates final viral envelopment for efficient viral replication. This is Tegument protein UL14 from Human herpesvirus 1 (strain 17) (HHV-1).